The primary structure comprises 133 residues: Phosphoribosyl-AMP cyclohydrolase (133 aa).

Residue Asp90 participates in Mg(2+) binding. Cys91 serves as a coordination point for Zn(2+). 2 residues coordinate Mg(2+): Asp92 and Asp94. Positions 107 and 114 each coordinate Zn(2+).

Belongs to the PRA-CH family. In terms of assembly, homodimer. Mg(2+) is required as a cofactor. Requires Zn(2+) as cofactor.

It localises to the cytoplasm. The catalysed reaction is 1-(5-phospho-beta-D-ribosyl)-5'-AMP + H2O = 1-(5-phospho-beta-D-ribosyl)-5-[(5-phospho-beta-D-ribosylamino)methylideneamino]imidazole-4-carboxamide. It functions in the pathway amino-acid biosynthesis; L-histidine biosynthesis; L-histidine from 5-phospho-alpha-D-ribose 1-diphosphate: step 3/9. Functionally, catalyzes the hydrolysis of the adenine ring of phosphoribosyl-AMP. This Streptomyces avermitilis (strain ATCC 31267 / DSM 46492 / JCM 5070 / NBRC 14893 / NCIMB 12804 / NRRL 8165 / MA-4680) protein is Phosphoribosyl-AMP cyclohydrolase.